We begin with the raw amino-acid sequence, 274 residues long: Orotidine 5'-phosphate decarboxylase (274 aa).

Substrate is bound by residues Asp-40, 62–64 (KTH), 93–102 (DRKFIDIGNT), Tyr-227, and Arg-245. Residue Lys-95 is the Proton donor of the active site.

This sequence belongs to the OMP decarboxylase family.

It catalyses the reaction orotidine 5'-phosphate + H(+) = UMP + CO2. Its pathway is pyrimidine metabolism; UMP biosynthesis via de novo pathway; UMP from orotate: step 2/2. The polypeptide is Orotidine 5'-phosphate decarboxylase (pyrG) (Emericella nidulans (strain FGSC A4 / ATCC 38163 / CBS 112.46 / NRRL 194 / M139) (Aspergillus nidulans)).